The sequence spans 177 residues: SAALAGTITLGASLGFQILDKVLGELGKVSRKIAVGVDNESGGSWTALNAYFRSGTTDVILPEFVPNQKALLYSGRKDTGPVATGAVAAFAYYMSNGHTLGVMFSVPFDYNLYSNWWDVKIYSGKRRADQAMYEDMYYGNPYRGDNGWHQKNLGYGLKMKGIMTSAVEAILEIRISR.

Residues Ala3–Ala12 are plays an important role in the hemolytic activity. The tract at residues Gly11–Ser30 is N-terminal region. Residues Ser54, Val87, Ser105, Pro107, Tyr133, Tyr137, and Tyr138 each contribute to the phosphocholine site. Residues Ser105–Lys120 are trp-rich region, which is important for the binding to lipid membrane.

The protein belongs to the actinoporin family. Sea anemone subfamily. In terms of assembly, octamer or nonamer in membranes. Monomer in the soluble state.

It localises to the secreted. The protein localises to the nematocyst. The protein resides in the target cell membrane. Pore-forming protein that forms cations-selective hydrophilic pores of around 1 nm and causes cardiac stimulation and cytolysis. Pore formation is a multi-step process that involves specific recognition of membrane sphingomyelin (but neither cholesterol nor phosphatidylcholine) using aromatic rich region and adjacent phosphocholine (POC) binding site, firm binding to the membrane (mainly driven by hydrophobic interactions) accompanied by the transfer of the N-terminal region to the lipid-water interface and finally pore formation after oligomerization of monomers. Cytolytic effects include red blood cells hemolysis, platelet aggregation and lysis, cytotoxic and cytostatic effects on fibroblasts. Lethality in mammals has been ascribed to severe vasospasm of coronary vessels, cardiac arrhythmia, and inotropic effects. Preincubation with exogenous sphingomyeline causes complete loss of hemolytic activity. The protein is DELTA-stichotoxin-Hcr4b of Radianthus crispa (Leathery sea anemone).